Reading from the N-terminus, the 306-residue chain is MKVLLANPRGFCAGVDRAIEIVERALKLHGAPVYVRHEVVHNKFVVDGLKAKGAIFVEDIADVPNEQVVIFSAHGVSMAVRKQTQDIDATIYDATCPLVTKVHKEVIRKQKQQHQVILIGHKGHPEVEGTLGQSNEELQLVETIEDVGRLNLSKNTPISYTTQTTLSIDDTKHIVDYLKSKFPTIDAPKKDNICYATQNRQDGVKILMQSSDILLVLGSSNSSNSNRLREIAEKMDIPAYLINDADEIDELWLKDVNTIGVTAGASAPEVLVQEVIHYLCDKGVTKVIEVNGAKENIHFPVPKELR.

Cys-12 contributes to the [4Fe-4S] cluster binding site. The (2E)-4-hydroxy-3-methylbut-2-enyl diphosphate site is built by His-41 and His-74. Residues His-41 and His-74 each coordinate dimethylallyl diphosphate. The isopentenyl diphosphate site is built by His-41 and His-74. Cys-96 is a binding site for [4Fe-4S] cluster. His-124 contributes to the (2E)-4-hydroxy-3-methylbut-2-enyl diphosphate binding site. Residue His-124 participates in dimethylallyl diphosphate binding. Residue His-124 coordinates isopentenyl diphosphate. Glu-126 acts as the Proton donor in catalysis. Position 164 (Thr-164) interacts with (2E)-4-hydroxy-3-methylbut-2-enyl diphosphate. A [4Fe-4S] cluster-binding site is contributed by Cys-194. Residues Ser-222, Ser-223, Asn-224, and Ser-266 each coordinate (2E)-4-hydroxy-3-methylbut-2-enyl diphosphate. The dimethylallyl diphosphate site is built by Ser-222, Ser-223, Asn-224, and Ser-266. Isopentenyl diphosphate contacts are provided by Ser-222, Ser-223, Asn-224, and Ser-266.

It belongs to the IspH family. [4Fe-4S] cluster is required as a cofactor.

It catalyses the reaction isopentenyl diphosphate + 2 oxidized [2Fe-2S]-[ferredoxin] + H2O = (2E)-4-hydroxy-3-methylbut-2-enyl diphosphate + 2 reduced [2Fe-2S]-[ferredoxin] + 2 H(+). It carries out the reaction dimethylallyl diphosphate + 2 oxidized [2Fe-2S]-[ferredoxin] + H2O = (2E)-4-hydroxy-3-methylbut-2-enyl diphosphate + 2 reduced [2Fe-2S]-[ferredoxin] + 2 H(+). It functions in the pathway isoprenoid biosynthesis; dimethylallyl diphosphate biosynthesis; dimethylallyl diphosphate from (2E)-4-hydroxy-3-methylbutenyl diphosphate: step 1/1. Its pathway is isoprenoid biosynthesis; isopentenyl diphosphate biosynthesis via DXP pathway; isopentenyl diphosphate from 1-deoxy-D-xylulose 5-phosphate: step 6/6. Its function is as follows. Catalyzes the conversion of 1-hydroxy-2-methyl-2-(E)-butenyl 4-diphosphate (HMBPP) into a mixture of isopentenyl diphosphate (IPP) and dimethylallyl diphosphate (DMAPP). Acts in the terminal step of the DOXP/MEP pathway for isoprenoid precursor biosynthesis. This Ruthia magnifica subsp. Calyptogena magnifica protein is 4-hydroxy-3-methylbut-2-enyl diphosphate reductase.